The sequence spans 292 residues: Elongation factor Ts (292 aa).

An involved in Mg(2+) ion dislocation from EF-Tu region spans residues 79-82; sequence TDFV.

This sequence belongs to the EF-Ts family.

It localises to the cytoplasm. In terms of biological role, associates with the EF-Tu.GDP complex and induces the exchange of GDP to GTP. It remains bound to the aminoacyl-tRNA.EF-Tu.GTP complex up to the GTP hydrolysis stage on the ribosome. In Staphylococcus haemolyticus (strain JCSC1435), this protein is Elongation factor Ts.